A 373-amino-acid polypeptide reads, in one-letter code: Cobalt-precorrin-5B C(1)-methyltransferase (373 aa).

The protein belongs to the CbiD family.

The catalysed reaction is Co-precorrin-5B + S-adenosyl-L-methionine = Co-precorrin-6A + S-adenosyl-L-homocysteine. The protein operates within cofactor biosynthesis; adenosylcobalamin biosynthesis; cob(II)yrinate a,c-diamide from sirohydrochlorin (anaerobic route): step 6/10. Functionally, catalyzes the methylation of C-1 in cobalt-precorrin-5B to form cobalt-precorrin-6A. The polypeptide is Cobalt-precorrin-5B C(1)-methyltransferase (Halorhodospira halophila (strain DSM 244 / SL1) (Ectothiorhodospira halophila (strain DSM 244 / SL1))).